Consider the following 832-residue polypeptide: Valine--tRNA ligase (832 aa).

Positions 41 to 51 (PNVTGKLHLGH) match the 'HIGH' region motif. The short motif at 512 to 516 (KMSKS) is the 'KMSKS' region element. Residue Lys-515 participates in ATP binding. Residues 760 to 831 (FIEISQEQKQ…QIYLEELKWK (72 aa)) are a coiled coil.

The protein belongs to the class-I aminoacyl-tRNA synthetase family. ValS type 1 subfamily. As to quaternary structure, monomer.

It is found in the cytoplasm. The enzyme catalyses tRNA(Val) + L-valine + ATP = L-valyl-tRNA(Val) + AMP + diphosphate. In terms of biological role, catalyzes the attachment of valine to tRNA(Val). As ValRS can inadvertently accommodate and process structurally similar amino acids such as threonine, to avoid such errors, it has a 'posttransfer' editing activity that hydrolyzes mischarged Thr-tRNA(Val) in a tRNA-dependent manner. The protein is Valine--tRNA ligase of Mycoplasmopsis synoviae (strain 53) (Mycoplasma synoviae).